The primary structure comprises 920 residues: Bcl-2-associated transcription factor 1 (920 aa).

Residues 1–437 form a disordered region; it reads MGRSNSRSHS…HRNTEEEGLK (437 aa). Positions 23–46 are enriched in basic residues; sequence SRSRSHSRKKRYSSRSRSRTYSRS. The span at 47–63 shows a compositional bias: basic and acidic residues; the sequence is RSRDRMYSRDYRRDYRN. Positions 87–134 are enriched in basic residues; sequence RYHRGGYRPVWNRRHSRSPRRGRSRSRSPKRRSVSSQRSRSRSRRSYR. Phosphoserine is present on residues serine 102 and serine 104. Low complexity predominate over residues 135–154; it reads SSRSPRSSSSRSSSPYSKSP. An N6-acetyllysine modification is found at lysine 152. A compositionally biased stretch (basic and acidic residues) spans 160 to 196; sequence GSQEKQTKKAEGEPQEESPLKSKSQEEPKDTFEHDPS. A phosphoserine mark is found at serine 177 and serine 181. Lysine 188 is covalently cross-linked (Glycyl lysine isopeptide (Lys-Gly) (interchain with G-Cter in SUMO2)). Phosphoserine occurs at positions 196 and 198. The residue at position 219 (tyrosine 219) is a Phosphotyrosine. 5 positions are modified to phosphoserine: serine 222, serine 259, serine 262, serine 264, and serine 268. At tyrosine 284 the chain carries Phosphotyrosine. Residues serine 285, serine 290, serine 297, serine 300, and serine 315 each carry the phosphoserine modification. Lysine 332 carries the post-translational modification N6-acetyllysine; alternate. Lysine 332 participates in a covalent cross-link: Glycyl lysine isopeptide (Lys-Gly) (interchain with G-Cter in SUMO2); alternate. Arginine 339 carries the post-translational modification Phosphoserine. A phosphothreonine mark is found at threonine 341 and threonine 355. The span at 353-373 shows a compositional bias: basic and acidic residues; the sequence is GNTRDKEASKEKGSEKGRAEG. Tyrosine 383 bears the Phosphotyrosine mark. The segment covering 384 to 396 has biased composition (basic and acidic residues); that stretch reads FSDKESGKQKFND. A phosphoserine mark is found at serine 385, serine 389, and serine 397. Over residues 397–406 the composition is skewed to acidic residues; that stretch reads SEGDDTEETE. A Phosphothreonine modification is found at threonine 402. Lysine 413 participates in a covalent cross-link: Glycyl lysine isopeptide (Lys-Gly) (interchain with G-Cter in SUMO2). Lysine 421 carries the post-translational modification N6-acetyllysine; alternate. Lysine 421 is covalently cross-linked (Glycyl lysine isopeptide (Lys-Gly) (interchain with G-Cter in SUMO2); alternate). Residues serine 422 and serine 427 each carry the phosphoserine modification. A Phosphothreonine modification is found at threonine 431. Lysine 437 carries the N6-acetyllysine; alternate modification. A Glycyl lysine isopeptide (Lys-Gly) (interchain with G-Cter in SUMO2); alternate cross-link involves residue lysine 437. The residue at position 450 (serine 450) is a Phosphoserine. Residues lysine 457 and lysine 462 each participate in a glycyl lysine isopeptide (Lys-Gly) (interchain with G-Cter in SUMO2) cross-link. A disordered region spans residues 464-502; it reads TGYVVERPSTTKDKHKEEDKNSERITVKKETQSPEQVKS. A Phosphoserine modification is found at serine 472. The segment covering 472 to 502 has biased composition (basic and acidic residues); sequence STTKDKHKEEDKNSERITVKKETQSPEQVKS. Lysine 475 is modified (N6-acetyllysine). Glycyl lysine isopeptide (Lys-Gly) (interchain with G-Cter in SUMO2) cross-links involve residues lysine 491 and lysine 492. Threonine 494 bears the Phosphothreonine mark. At serine 496 the chain carries Phosphoserine. Lysine 501 participates in a covalent cross-link: Glycyl lysine isopeptide (Lys-Gly) (interchain with G-Cter in SUMO2). Phosphoserine is present on residues serine 502, serine 512, serine 525, and serine 531. Glycyl lysine isopeptide (Lys-Gly) (interchain with G-Cter in SUMO2) cross-links involve residues lysine 536, lysine 548, and lysine 550. Serine 559 and serine 564 each carry phosphoserine. Threonine 566 carries the phosphothreonine modification. Lysine 567 is covalently cross-linked (Glycyl lysine isopeptide (Lys-Gly) (interchain with G-Cter in SUMO2)). A Phosphoserine modification is found at serine 578. A Glycyl lysine isopeptide (Lys-Gly) (interchain with G-Cter in SUMO2); alternate cross-link involves residue lysine 580. Residue lysine 580 forms a Glycyl lysine isopeptide (Lys-Gly) (interchain with G-Cter in SUMO1); alternate linkage. Glycyl lysine isopeptide (Lys-Gly) (interchain with G-Cter in SUMO2) cross-links involve residues lysine 593, lysine 599, and lysine 622. Residues 637-796 are disordered; the sequence is KATEEHSTRQ…SGFAGVSRPR (160 aa). Over residues 638 to 656 the composition is skewed to basic and acidic residues; sequence ATEEHSTRQKSPEIHRRID. A phosphoserine mark is found at serine 648, serine 658, and serine 660. Threonine 661 is subject to Phosphothreonine. Over residues 668–750 the composition is skewed to basic and acidic residues; it reads LAGEERVFKE…KHKREQDHSR (83 aa). Residue lysine 676 forms a Glycyl lysine isopeptide (Lys-Gly) (interchain with G-Cter in SUMO2) linkage. Residues serine 690 and serine 760 each carry the phosphoserine modification. Low complexity predominate over residues 751 to 762; the sequence is SSSSSASPSSPS. Basic and acidic residues predominate over residues 763-785; it reads SREEKESKKEREEEFKTHHEMKE. Glycyl lysine isopeptide (Lys-Gly) (interchain with G-Cter in SUMO2) cross-links involve residues lysine 778 and lysine 784. Arginine 803 carries the post-translational modification Citrulline. Omega-N-methylarginine is present on arginine 809. Residues 810–825 show a composition bias toward low complexity; the sequence is GVFAGTNTGPNNSNTT. Disordered regions lie at residues 810–840 and 862–920; these read GVFAGTNTGPNNSNTTFQKRPKEEEWDPEYT and RGRG…EEKE. Lysine 831 is covalently cross-linked (Glycyl lysine isopeptide (Lys-Gly) (interchain with G-Cter in SUMO2); alternate). Lysine 831 participates in a covalent cross-link: Glycyl lysine isopeptide (Lys-Gly) (interchain with G-Cter in SUMO1); alternate. The span at 897-907 shows a compositional bias: acidic residues; it reads IVEDEEETMEN. Residues 908 to 920 show a composition bias toward basic and acidic residues; it reads NEEKKDRRKEEKE. Lysine 911 participates in a covalent cross-link: Glycyl lysine isopeptide (Lys-Gly) (interchain with G-Cter in SUMO2).

The protein belongs to the BCLAF1/THRAP3 family. Interacts with Bcl-2 related proteins, EMD, with the adenovirus E1B 19 kDa protein and with DNA. Component of the SNARP complex which consists at least of SNIP1, SNW1, THRAP3, BCLAF1 and PNN. Component of a MACOM-like complex, named WTAP complex, composed of WTAP, ZC3H13, CBLL1, KIAA1429, RBM15, BCLAF1 and THRAP3. Post-translationally, citrullinated by PADI4. As to expression, ubiquitous.

It localises to the cytoplasm. The protein localises to the nucleus. Its subcellular location is the nucleus speckle. The protein resides in the nucleoplasm. Functionally, death-promoting transcriptional repressor. May be involved in cyclin-D1/CCND1 mRNA stability through the SNARP complex which associates with both the 3'end of the CCND1 gene and its mRNA. The protein is Bcl-2-associated transcription factor 1 (BCLAF1) of Homo sapiens (Human).